A 270-amino-acid polypeptide reads, in one-letter code: Beta carbonic anhydrase 1 (270 aa).

The Zn(2+) site is built by cysteine 39, aspartate 41, histidine 105, and cysteine 108.

It belongs to the beta-class carbonic anhydrase family. The cofactor is Zn(2+).

The enzyme catalyses hydrogencarbonate + H(+) = CO2 + H2O. Its function is as follows. Reversible hydration of carbon dioxide. In Caenorhabditis briggsae, this protein is Beta carbonic anhydrase 1.